A 216-amino-acid chain; its full sequence is Protein ADP-ribose pyrophosphatase ORF38 (216 aa).

One can recognise a Nudix hydrolase domain in the interval 1 to 177; sequence MRNAAGLFMI…DYSNYIEFFD (177 aa). The Nudix box signature appears at 48–70; the sequence is GHRDCCDAKVYETAVREFVEETG.

The protein resides in the host cytoplasm. Its subcellular location is the host nucleus. It catalyses the reaction ADP-D-ribose + H2O = D-ribose 5-phosphate + AMP + 2 H(+). In terms of biological role, plays an important role in virus replication most probably through its hydrolyzing ADP-ribose activity in host cells. May function in viral DNA replication or transcription directly, or by removing toxic substances or metabolic intermediates. The polypeptide is Protein ADP-ribose pyrophosphatase ORF38 (Lepidoptera (butterflies and moths)).